The following is a 445-amino-acid chain: Phosphoglucosamine mutase (445 aa).

The active-site Phosphoserine intermediate is the Ser102. Mg(2+) contacts are provided by Ser102, Asp241, Asp243, and Asp245. Ser102 is modified (phosphoserine).

This sequence belongs to the phosphohexose mutase family. The cofactor is Mg(2+). Post-translationally, activated by phosphorylation.

The catalysed reaction is alpha-D-glucosamine 1-phosphate = D-glucosamine 6-phosphate. Catalyzes the conversion of glucosamine-6-phosphate to glucosamine-1-phosphate. The sequence is that of Phosphoglucosamine mutase from Klebsiella pneumoniae (strain 342).